We begin with the raw amino-acid sequence, 306 residues long: Polyadenylate-binding protein 2 (306 aa).

Residues 1-12 are compositionally biased toward low complexity; sequence MAAAAAAAAAAG. The tract at residues 1 to 115 is disordered; it reads MAAAAAAAAA…EGDPGDGAIE (115 aa). Ala2 bears the N-acetylalanine mark. Residues 2-145 form an interaction with SKIP region; the sequence is AAAAAAAAAA…LKELQNEVEK (144 aa). Arg17 is modified (omega-N-methylarginine). Ser19 is subject to Phosphoserine. Gly residues predominate over residues 30 to 47; the sequence is GAGGEAGEGAPGGAGDYG. Over residues 51-72 the composition is skewed to acidic residues; sequence ESEELEPEELLLEPEPEPEPEE. Ser52 is subject to Phosphoserine. Pro residues predominate over residues 77–87; it reads PRAPPGAPGPG. Positions 115–151 form a coiled coil; it reads EDPELEAIKARVREMEEEAEKLKELQNEVEKQMNMSP. Residues 119–147 form a stimulates PAPOLA region; sequence LEAIKARVREMEEEAEKLKELQNEVEKQM. Ser150 and Ser235 each carry phosphoserine. Residues 155 to 306 form a necessary for homooligomerization region; it reads NAGPVIMSIE…ARATSWYSPY (152 aa). Residues 172–249 enclose the RRM domain; sequence RSIYVGNVDY…RQIKVIPKRT (78 aa). 3 positions are modified to asymmetric dimethylarginine; alternate: Arg238, Arg259, and Arg263. Residues Arg238, Arg259, and Arg263 each carry the omega-N-methylarginine; alternate modification. 11 positions are modified to asymmetric dimethylarginine: Arg265, Arg267, Arg269, Arg277, Arg279, Arg287, Arg289, Arg291, Arg294, Arg296, and Arg298. Positions 286-306 are interaction with PAPOLA; sequence SRPRGRVYRGRARATSWYSPY.

Monomer and homooligomer. Binds RNA as a monomer and oligomerizes when bound to poly(A). Associates in a ternary complex with CPSF4 and NS/NS1 and interaction with NS/NS1, blocks nuclear export of host cell mRNAs. Associates in a single complex with SKIP and MYOD1 and interacts with SKIP in differentiated myocytes. Interacts with NUDT21/CPSF5. Identified in a IGF2BP1-dependent mRNP granule complex containing untranslated mRNAs. Interacts with PAPOLA, but only in presence of oligo(A) RNA. Interacts with transportin. May interact with SETX. Interacts (via RRM domain and C-terminal arginine-rich region) with ZFP36 (via hypophosphorylated form); this interaction occurs in the nucleus in a RNA-independent manner, decreases in presence of single-stranded poly(A) RNA-oligomer and in a p38-dependent-manner and may down-regulated RNA poly(A) polymerase activity. Component of the poly(A) tail exosome targeting (PAXT) complex composed of PABPN1, ZFC3H1 and MTREX. Interacts with ZFC3H1 in a RNase-insensitive manner. Interacts with FRG1. Interacts with ZC3H11A. Arginine dimethylation is asymmetric and involves PRMT1 and PRMT3. It does not influence the RNA binding properties. Ubiquitous.

It is found in the nucleus. Its subcellular location is the cytoplasm. It localises to the nucleus speckle. Functionally, involved in the 3'-end formation of mRNA precursors (pre-mRNA) by the addition of a poly(A) tail of 200-250 nt to the upstream cleavage product. Stimulates poly(A) polymerase (PAPOLA) conferring processivity on the poly(A) tail elongation reaction and also controls the poly(A) tail length. Increases the affinity of poly(A) polymerase for RNA. Is also present at various stages of mRNA metabolism including nucleocytoplasmic trafficking and nonsense-mediated decay (NMD) of mRNA. Cooperates with SKIP to synergistically activate E-box-mediated transcription through MYOD1 and may regulate the expression of muscle-specific genes. Binds to poly(A) and to poly(G) with high affinity. May protect the poly(A) tail from degradation. Subunit of the trimeric poly(A) tail exosome targeting (PAXT) complex, a complex that directs a subset of long and polyadenylated poly(A) RNAs for exosomal degradation. The RNA exosome is fundamental for the degradation of RNA in eukaryotic nuclei. Substrate targeting is facilitated by its cofactor MTREX, which links to RNA-binding protein adapters. This chain is Polyadenylate-binding protein 2 (PABPN1), found in Bos taurus (Bovine).